The primary structure comprises 130 residues: Small ribosomal subunit protein uS9 (130 aa).

Residues 105–130 are disordered; it reads TRDPRMKERKKYGLKKARRAPQFSKR. Residues 111–130 are compositionally biased toward basic residues; sequence KERKKYGLKKARRAPQFSKR.

The protein belongs to the universal ribosomal protein uS9 family.

The sequence is that of Small ribosomal subunit protein uS9 from Acetivibrio thermocellus (strain ATCC 27405 / DSM 1237 / JCM 9322 / NBRC 103400 / NCIMB 10682 / NRRL B-4536 / VPI 7372) (Clostridium thermocellum).